The chain runs to 385 residues: Transcription termination factor 2, mitochondrial (385 aa).

The transit peptide at 1-35 (MSWRLLTGYQLCRLRLFRKPQPALKIRPSSVCVTY) directs the protein to the mitochondrion.

Belongs to the mTERF family. Monomer.

It is found in the mitochondrion matrix. It localises to the mitochondrion nucleoid. In terms of biological role, binds mitochondrial DNA and plays a role in the regulation of transcription of mitochondrial mRNA and rRNA species. The chain is Transcription termination factor 2, mitochondrial (Mterf2) from Rattus norvegicus (Rat).